The sequence spans 277 residues: Shikimate dehydrogenase (NADP(+)) (277 aa).

Shikimate is bound by residues 20 to 22 (SLS) and Thr-67. The Proton acceptor role is filled by Lys-71. Position 83 (Asp-83) interacts with NADP(+). 2 residues coordinate shikimate: Asn-92 and Asp-107. NADP(+) is bound by residues 131-135 (GAGGV) and Ile-219. Tyr-221 is a binding site for shikimate. Gly-242 lines the NADP(+) pocket.

It belongs to the shikimate dehydrogenase family. In terms of assembly, homodimer.

It carries out the reaction shikimate + NADP(+) = 3-dehydroshikimate + NADPH + H(+). The protein operates within metabolic intermediate biosynthesis; chorismate biosynthesis; chorismate from D-erythrose 4-phosphate and phosphoenolpyruvate: step 4/7. Involved in the biosynthesis of the chorismate, which leads to the biosynthesis of aromatic amino acids. Catalyzes the reversible NADPH linked reduction of 3-dehydroshikimate (DHSA) to yield shikimate (SA). This Pelobacter propionicus (strain DSM 2379 / NBRC 103807 / OttBd1) protein is Shikimate dehydrogenase (NADP(+)).